We begin with the raw amino-acid sequence, 137 residues long: Small ribosomal subunit protein eS6 (137 aa).

Acidic residues predominate over residues 114–127 (LPVEEAPAEDAPES). Residues 114-137 (LPVEEAPAEDAPESAEEKSEDKKE) are disordered. A compositionally biased stretch (basic and acidic residues) spans 128–137 (AEEKSEDKKE).

The protein belongs to the eukaryotic ribosomal protein eS6 family.

In Nitrosopumilus maritimus (strain SCM1), this protein is Small ribosomal subunit protein eS6.